Reading from the N-terminus, the 207-residue chain is Outer-membrane lipoprotein LolB (207 aa).

Residues 1 to 23 (MPTMNRSRRLALLCLGAPLLLAA) form the signal peptide. The N-palmitoyl cysteine moiety is linked to residue Cys24. Cys24 carries the S-diacylglycerol cysteine lipid modification. The tract at residues 171-207 (PSASQAPAPRPRRIDLEREGGPTPLAVKLVIDPEEAP) is disordered.

It belongs to the LolB family. As to quaternary structure, monomer.

It localises to the cell outer membrane. Its function is as follows. Plays a critical role in the incorporation of lipoproteins in the outer membrane after they are released by the LolA protein. This Cupriavidus pinatubonensis (strain JMP 134 / LMG 1197) (Cupriavidus necator (strain JMP 134)) protein is Outer-membrane lipoprotein LolB.